A 312-amino-acid chain; its full sequence is NADPH-dependent alpha-keto amide reductase (312 aa).

Residues G25, T26, R27, and D59 each contribute to the NADPH site. Residues Y64 and H122 each act as proton donor in the active site. Position 123 is a phosphoserine (S123). NADPH is bound by residues S157, Q179, S208, L210, T257, T258, S259, S260, K261, and R264.

Belongs to the aldo/keto reductase family. Monomer. Post-translationally, the N-terminus is blocked.

It localises to the cytoplasm. The protein resides in the nucleus. Its function is as follows. Reduces aromatic alpha-keto amides, aliphatic and aromatic alpha-keto esters, but not beta-keto esters. This chain is NADPH-dependent alpha-keto amide reductase, found in Saccharomyces cerevisiae (strain ATCC 204508 / S288c) (Baker's yeast).